We begin with the raw amino-acid sequence, 144 residues long: Large ribosomal subunit protein uL15 (144 aa).

Residues 1–52 (MRLNTLSPAEGAKHAPKRVGRGIGSGLGKTGGRGHKGQKSRSGGGVRRGFEG) are disordered. Residues 21–31 (RGIGSGLGKTG) show a composition bias toward gly residues.

It belongs to the universal ribosomal protein uL15 family. In terms of assembly, part of the 50S ribosomal subunit.

Binds to the 23S rRNA. This is Large ribosomal subunit protein uL15 from Buchnera aphidicola subsp. Acyrthosiphon kondoi (Acyrthosiphon kondoi symbiotic bacterium).